Here is a 610-residue protein sequence, read N- to C-terminus: ESX-5 secretion system protein EccA5 (610 aa).

357–364 (GPPGTGKT) contacts ATP.

The protein belongs to the CbxX/CfxQ family. In terms of assembly, part of the ESX-5 / type VII secretion system (T7SS), which is composed of cytosolic and membrane components.

It is found in the cytoplasm. Its function is as follows. Part of an ESX-5 / type VII specialized secretion system (T7SS), which exports several proteins. EccA5 exhibits ATPase activity and may provide energy for the export of ESX-5 substrates. This chain is ESX-5 secretion system protein EccA5, found in Mycobacterium bovis (strain ATCC BAA-935 / AF2122/97).